The following is a 417-amino-acid chain: NADH-quinone oxidoreductase subunit D (417 aa).

This sequence belongs to the complex I 49 kDa subunit family. NDH-1 is composed of 14 different subunits. Subunits NuoB, C, D, E, F, and G constitute the peripheral sector of the complex.

It is found in the cell inner membrane. The enzyme catalyses a quinone + NADH + 5 H(+)(in) = a quinol + NAD(+) + 4 H(+)(out). Its function is as follows. NDH-1 shuttles electrons from NADH, via FMN and iron-sulfur (Fe-S) centers, to quinones in the respiratory chain. The immediate electron acceptor for the enzyme in this species is believed to be ubiquinone. Couples the redox reaction to proton translocation (for every two electrons transferred, four hydrogen ions are translocated across the cytoplasmic membrane), and thus conserves the redox energy in a proton gradient. The protein is NADH-quinone oxidoreductase subunit D of Acidovorax sp. (strain JS42).